We begin with the raw amino-acid sequence, 156 residues long: ATP synthase subunit b (156 aa).

A helical transmembrane segment spans residues 11–31 (AIAFVLFVMFCMKFVWPPIMA).

Belongs to the ATPase B chain family. In terms of assembly, F-type ATPases have 2 components, F(1) - the catalytic core - and F(0) - the membrane proton channel. F(1) has five subunits: alpha(3), beta(3), gamma(1), delta(1), epsilon(1). F(0) has three main subunits: a(1), b(2) and c(10-14). The alpha and beta chains form an alternating ring which encloses part of the gamma chain. F(1) is attached to F(0) by a central stalk formed by the gamma and epsilon chains, while a peripheral stalk is formed by the delta and b chains.

Its subcellular location is the cell inner membrane. Functionally, f(1)F(0) ATP synthase produces ATP from ADP in the presence of a proton or sodium gradient. F-type ATPases consist of two structural domains, F(1) containing the extramembraneous catalytic core and F(0) containing the membrane proton channel, linked together by a central stalk and a peripheral stalk. During catalysis, ATP synthesis in the catalytic domain of F(1) is coupled via a rotary mechanism of the central stalk subunits to proton translocation. Its function is as follows. Component of the F(0) channel, it forms part of the peripheral stalk, linking F(1) to F(0). This is ATP synthase subunit b from Photorhabdus laumondii subsp. laumondii (strain DSM 15139 / CIP 105565 / TT01) (Photorhabdus luminescens subsp. laumondii).